The primary structure comprises 1366 residues: DNA-directed RNA polymerase subunit beta' (1366 aa).

Positions 1–40 (MTSTSPKSRRSSGKGRKGSKKKGKQVSQIPPLSKTPPSFR) are disordered. Over residues 7 to 24 (KSRRSSGKGRKGSKKKGK) the composition is skewed to basic residues. Residues 25–38 (QVSQIPPLSKTPPS) show a composition bias toward polar residues. Zn(2+) contacts are provided by Cys250, Cys317, Cys324, and Cys327. Positions 1299 to 1366 (TAAKSTSVLD…LQEEGLLADE (68 aa)) are disordered. Positions 1353–1366 (ALEGLQEEGLLADE) are enriched in low complexity.

Belongs to the RNA polymerase beta' chain family. RpoC2 subfamily. In terms of assembly, in cyanobacteria the RNAP catalytic core is composed of 2 alpha, 1 beta, 1 beta', 1 gamma and 1 omega subunit. When a sigma factor is associated with the core the holoenzyme is formed, which can initiate transcription. Zn(2+) serves as cofactor.

It carries out the reaction RNA(n) + a ribonucleoside 5'-triphosphate = RNA(n+1) + diphosphate. In terms of biological role, DNA-dependent RNA polymerase catalyzes the transcription of DNA into RNA using the four ribonucleoside triphosphates as substrates. The protein is DNA-directed RNA polymerase subunit beta' of Prochlorococcus marinus (strain MIT 9211).